The primary structure comprises 159 residues: Cyclic pyranopterin monophosphate synthase (159 aa).

Substrate-binding positions include 75 to 77 (LCH) and 113 to 114 (ME). Residue Asp-128 is part of the active site.

This sequence belongs to the MoaC family. In terms of assembly, homohexamer; trimer of dimers.

The catalysed reaction is (8S)-3',8-cyclo-7,8-dihydroguanosine 5'-triphosphate = cyclic pyranopterin phosphate + diphosphate. It functions in the pathway cofactor biosynthesis; molybdopterin biosynthesis. Catalyzes the conversion of (8S)-3',8-cyclo-7,8-dihydroguanosine 5'-triphosphate to cyclic pyranopterin monophosphate (cPMP). The sequence is that of Cyclic pyranopterin monophosphate synthase from Cupriavidus necator (strain ATCC 17699 / DSM 428 / KCTC 22496 / NCIMB 10442 / H16 / Stanier 337) (Ralstonia eutropha).